The sequence spans 826 residues: Golgin subfamily A member 6-like protein 25 (826 aa).

Disordered regions lie at residues 1–100 (MWPQ…HQEA), 297–327 (QEQEEKIREQEEKMRRQEEMMWEKEEKMRRQ), 345–425 (MHEQ…EMWR), 502–534 (QEEMWREEEKMHEQEKIWEEEKRQEQEDKMWRQ), 547–646 (RQEE…EQEE), and 658–826 (QEEM…MQEH). Basic and acidic residues predominate over residues 31–52 (MSKETRQSKLAEAKEQLTDHHP). Composition is skewed to polar residues over residues 53–63 (QTNPSVGTAAS) and 71–83 (NNGTNPETTTSGG). The segment covering 86–100 (SPEDEQKASHQHQEA) has biased composition (basic and acidic residues). Residues 157–822 (LEQALSAVAT…EVRLRQQEEK (666 aa)) adopt a coiled-coil conformation. Basic and acidic residues-rich tracts occupy residues 658-678 (QEEMMQEQEEKMGEQEEKMWE) and 686-826 (QEEK…MQEH).

This sequence belongs to the GOLGA6 family.

This is Golgin subfamily A member 6-like protein 25 from Homo sapiens (Human).